Reading from the N-terminus, the 460-residue chain is MAISAALILAAGKGTRMKSALVKVLHELAGRPMLGWPLAAAREAGAGQIVIVAGHQADQVQKRFGADAGIRIALQEEQLGTGHAVSCSLDQLDGLSGAVLILCGDTPLLTAATLQRLAAEHAASGAAVTVLTAKLDRPFGYGRIVRDSEGRVRRIVEQKDASPEEQAIDEVNSGIYCMELEFLRSHIGRLGSENAQNEYYLTDLVGIAVAEHAGCSAVVADDPDEIMGVNDRVQLAHAARVLRQRVNLQLMLAGVTLIDPDQTYIDADVQVGNDTIIWPGCVLRGATSIGSGCTLENNVRVSDCVIADRVQLKAGSVLSEAQVAEDVSVGPMAHLRPGSVLQAQVKIGNFVETKKVVMGTGSKASHLTYLGDAEIGSDVNIGCGTITCNYDGRHKHKTVIGDGVFVGSDVQLVAPVTVGANALIAAGTTVTQDVPPDSLAIARTPQVNKTGWCLKKRDNG.

Residues 1–232 (MAISAALILA…PDEIMGVNDR (232 aa)) form a pyrophosphorylase region. UDP-N-acetyl-alpha-D-glucosamine-binding positions include 9 to 12 (LAAG), lysine 23, glutamine 75, and 80 to 81 (GT). Aspartate 105 lines the Mg(2+) pocket. UDP-N-acetyl-alpha-D-glucosamine-binding residues include glycine 142, glutamate 157, asparagine 172, and asparagine 230. Asparagine 230 lines the Mg(2+) pocket. Positions 233–253 (VQLAHAARVLRQRVNLQLMLA) are linker. The interval 254–460 (GVTLIDPDQT…GWCLKKRDNG (207 aa)) is N-acetyltransferase. UDP-N-acetyl-alpha-D-glucosamine-binding residues include arginine 336 and lysine 354. Histidine 366 serves as the catalytic Proton acceptor. Residues tyrosine 369 and asparagine 380 each coordinate UDP-N-acetyl-alpha-D-glucosamine. Acetyl-CoA-binding positions include 389–390 (NY), serine 408, alanine 426, and arginine 443.

The protein in the N-terminal section; belongs to the N-acetylglucosamine-1-phosphate uridyltransferase family. In the C-terminal section; belongs to the transferase hexapeptide repeat family. As to quaternary structure, homotrimer. It depends on Mg(2+) as a cofactor.

The protein localises to the cytoplasm. The enzyme catalyses alpha-D-glucosamine 1-phosphate + acetyl-CoA = N-acetyl-alpha-D-glucosamine 1-phosphate + CoA + H(+). It carries out the reaction N-acetyl-alpha-D-glucosamine 1-phosphate + UTP + H(+) = UDP-N-acetyl-alpha-D-glucosamine + diphosphate. The protein operates within nucleotide-sugar biosynthesis; UDP-N-acetyl-alpha-D-glucosamine biosynthesis; N-acetyl-alpha-D-glucosamine 1-phosphate from alpha-D-glucosamine 6-phosphate (route II): step 2/2. It functions in the pathway nucleotide-sugar biosynthesis; UDP-N-acetyl-alpha-D-glucosamine biosynthesis; UDP-N-acetyl-alpha-D-glucosamine from N-acetyl-alpha-D-glucosamine 1-phosphate: step 1/1. It participates in bacterial outer membrane biogenesis; LPS lipid A biosynthesis. In terms of biological role, catalyzes the last two sequential reactions in the de novo biosynthetic pathway for UDP-N-acetylglucosamine (UDP-GlcNAc). The C-terminal domain catalyzes the transfer of acetyl group from acetyl coenzyme A to glucosamine-1-phosphate (GlcN-1-P) to produce N-acetylglucosamine-1-phosphate (GlcNAc-1-P), which is converted into UDP-GlcNAc by the transfer of uridine 5-monophosphate (from uridine 5-triphosphate), a reaction catalyzed by the N-terminal domain. This Trichlorobacter lovleyi (strain ATCC BAA-1151 / DSM 17278 / SZ) (Geobacter lovleyi) protein is Bifunctional protein GlmU.